Here is a 79-residue protein sequence, read N- to C-terminus: Cell division protein ZapB (79 aa).

Positions 4-78 (EVFEKLEAKV…LQALLGKMEE (75 aa)) form a coiled coil.

The protein belongs to the ZapB family. In terms of assembly, homodimer. The ends of the coiled-coil dimer bind to each other, forming polymers. Interacts with FtsZ.

It localises to the cytoplasm. Functionally, non-essential, abundant cell division factor that is required for proper Z-ring formation. It is recruited early to the divisome by direct interaction with FtsZ, stimulating Z-ring assembly and thereby promoting cell division earlier in the cell cycle. Its recruitment to the Z-ring requires functional FtsA or ZipA. The chain is Cell division protein ZapB from Cronobacter sakazakii (strain ATCC BAA-894) (Enterobacter sakazakii).